Reading from the N-terminus, the 453-residue chain is MKFSAVILAAGKGTRMYSNMPKVLHTLAGKPMVKHVIDTCTGLGAQNIHLVYGHGGDQMQAALAEEPVNWVLQAEQLGTGHAVDQASPQFEDDEKILVLYGDVPLISSETIESLLDAQPKGGIALLTVVLDNPTGYGRIVRKNGPVVAIVEQKDANEEQKLIKEINTGVMVATGGDLKRWLAGLNNDNAQGEYYLTDVIAAAHDEGNAVEAVHPVSPIEVEGVNDRAQLARLERAFQAAQAKKLLEQGVMLRDPARFDLRGELQCGLDVEIDVNVIIEGNVSLGDNVVIGAGCVLKDCEIDDNTIVRPYSVIEGATVGEQCTVGPFTRLRPGAEMRNDSHVGNFVEVKNARIGEGSKANHLTYLGDAEIGQRTNIGAGTITCNYDGANKFKTIIGNDVFVGSDSQLVAPLTIADGATIGAGTTLTKDVAEGELVITRAKERKVTGWQRPVKKK.

Residues 1–226 (MKFSAVILAA…PIEVEGVNDR (226 aa)) are pyrophosphorylase. Residues 8 to 11 (LAAG), Lys-22, Gln-73, 78 to 79 (GT), 100 to 102 (YGD), Gly-137, Glu-151, Asn-166, and Asn-224 contribute to the UDP-N-acetyl-alpha-D-glucosamine site. A Mg(2+)-binding site is contributed by Asp-102. Asn-224 is a Mg(2+) binding site. A linker region spans residues 227-247 (AQLARLERAFQAAQAKKLLEQ). The tract at residues 248–453 (GVMLRDPARF…TGWQRPVKKK (206 aa)) is N-acetyltransferase. The UDP-N-acetyl-alpha-D-glucosamine site is built by Arg-330 and Lys-348. The active-site Proton acceptor is His-360. 2 residues coordinate UDP-N-acetyl-alpha-D-glucosamine: Tyr-363 and Asn-374. Residues Ala-377, 383 to 384 (NY), Ser-402, Ala-420, and Arg-437 each bind acetyl-CoA.

This sequence in the N-terminal section; belongs to the N-acetylglucosamine-1-phosphate uridyltransferase family. It in the C-terminal section; belongs to the transferase hexapeptide repeat family. As to quaternary structure, homotrimer. Mg(2+) is required as a cofactor.

The protein resides in the cytoplasm. It carries out the reaction alpha-D-glucosamine 1-phosphate + acetyl-CoA = N-acetyl-alpha-D-glucosamine 1-phosphate + CoA + H(+). The enzyme catalyses N-acetyl-alpha-D-glucosamine 1-phosphate + UTP + H(+) = UDP-N-acetyl-alpha-D-glucosamine + diphosphate. The protein operates within nucleotide-sugar biosynthesis; UDP-N-acetyl-alpha-D-glucosamine biosynthesis; N-acetyl-alpha-D-glucosamine 1-phosphate from alpha-D-glucosamine 6-phosphate (route II): step 2/2. Its pathway is nucleotide-sugar biosynthesis; UDP-N-acetyl-alpha-D-glucosamine biosynthesis; UDP-N-acetyl-alpha-D-glucosamine from N-acetyl-alpha-D-glucosamine 1-phosphate: step 1/1. It functions in the pathway bacterial outer membrane biogenesis; LPS lipid A biosynthesis. In terms of biological role, catalyzes the last two sequential reactions in the de novo biosynthetic pathway for UDP-N-acetylglucosamine (UDP-GlcNAc). The C-terminal domain catalyzes the transfer of acetyl group from acetyl coenzyme A to glucosamine-1-phosphate (GlcN-1-P) to produce N-acetylglucosamine-1-phosphate (GlcNAc-1-P), which is converted into UDP-GlcNAc by the transfer of uridine 5-monophosphate (from uridine 5-triphosphate), a reaction catalyzed by the N-terminal domain. The polypeptide is Bifunctional protein GlmU (Vibrio vulnificus (strain CMCP6)).